The primary structure comprises 376 residues: Cytoplasmic tRNA 2-thiolation protein 1 (376 aa).

Belongs to the TtcA family. CTU1/NCS6/ATPBD3 subfamily.

It is found in the cytoplasm. It participates in tRNA modification; 5-methoxycarbonylmethyl-2-thiouridine-tRNA biosynthesis. Plays a central role in 2-thiolation of mcm(5)S(2)U at tRNA wobble positions of tRNA(Lys), tRNA(Glu) and tRNA(Gln). Directly binds tRNAs and probably acts by catalyzing adenylation of tRNAs, an intermediate required for 2-thiolation. It is unclear whether it acts as a sulfurtransferase that transfers sulfur from thiocarboxylated URM1 onto the uridine of tRNAs at wobble position. Prior mcm(5) tRNA modification by the elongator complex is required for 2-thiolation. May also be involved in protein urmylation. This is Cytoplasmic tRNA 2-thiolation protein 1 from Scheffersomyces stipitis (strain ATCC 58785 / CBS 6054 / NBRC 10063 / NRRL Y-11545) (Yeast).